A 473-amino-acid chain; its full sequence is ATP synthase subunit beta, chloroplastic (473 aa).

Gly172–Thr179 provides a ligand contact to ATP.

Belongs to the ATPase alpha/beta chains family. In terms of assembly, F-type ATPases have 2 components, CF(1) - the catalytic core - and CF(0) - the membrane proton channel. CF(1) has five subunits: alpha(3), beta(3), gamma(1), delta(1), epsilon(1). CF(0) has four main subunits: a(1), b(1), b'(1) and c(9-12).

Its subcellular location is the plastid. It localises to the chloroplast thylakoid membrane. The enzyme catalyses ATP + H2O + 4 H(+)(in) = ADP + phosphate + 5 H(+)(out). Produces ATP from ADP in the presence of a proton gradient across the membrane. The catalytic sites are hosted primarily by the beta subunits. The sequence is that of ATP synthase subunit beta, chloroplastic from Pteridium esculentum (Bracken fern).